Consider the following 339-residue polypeptide: Replication factor C subunit 4 (339 aa).

49-56 (GPPGTGKT) lines the ATP pocket.

This sequence belongs to the activator 1 small subunits family. As to quaternary structure, heterotetramer of subunits RFC2, RFC3, RFC4 and RFC5 that can form a complex with RFC1.

The protein localises to the nucleus. Functionally, may be involved in DNA replication and thus regulate cell proliferation. This chain is Replication factor C subunit 4 (RFC4), found in Arabidopsis thaliana (Mouse-ear cress).